Reading from the N-terminus, the 392-residue chain is 1-deoxy-D-xylulose 5-phosphate reductoisomerase (392 aa).

The NADPH site is built by Thr-10, Gly-11, Ser-12, Ile-13, Arg-37, Gln-38, and Asn-124. Position 125 (Lys-125) interacts with 1-deoxy-D-xylulose 5-phosphate. Position 126 (Glu-126) interacts with NADPH. Residue Asp-150 participates in Mn(2+) binding. The 1-deoxy-D-xylulose 5-phosphate site is built by Ser-151, Glu-152, Ser-179, and His-202. Mn(2+) is bound at residue Glu-152. Gly-208 contributes to the NADPH binding site. 1-deoxy-D-xylulose 5-phosphate-binding residues include Ser-215, Asn-220, Lys-221, and Glu-224. Glu-224 contributes to the Mn(2+) binding site.

Belongs to the DXR family. It depends on Mg(2+) as a cofactor. Mn(2+) is required as a cofactor.

The enzyme catalyses 2-C-methyl-D-erythritol 4-phosphate + NADP(+) = 1-deoxy-D-xylulose 5-phosphate + NADPH + H(+). The protein operates within isoprenoid biosynthesis; isopentenyl diphosphate biosynthesis via DXP pathway; isopentenyl diphosphate from 1-deoxy-D-xylulose 5-phosphate: step 1/6. Functionally, catalyzes the NADPH-dependent rearrangement and reduction of 1-deoxy-D-xylulose-5-phosphate (DXP) to 2-C-methyl-D-erythritol 4-phosphate (MEP). The sequence is that of 1-deoxy-D-xylulose 5-phosphate reductoisomerase from Cupriavidus metallidurans (strain ATCC 43123 / DSM 2839 / NBRC 102507 / CH34) (Ralstonia metallidurans).